Here is a 251-residue protein sequence, read N- to C-terminus: ATP synthase subunit a (251 aa).

The next 7 membrane-spanning stretches (helical) occupy residues 28–48 (FTQS…IIAL), 63–80 (LVEI…EQIG), 86–106 (FFPF…LGLF), 115–135 (HVAV…AVAL), 154–176 (ALAP…SLSI), 195–215 (FMFL…LLPM), and 219–239 (VTLV…FAIL).

This sequence belongs to the ATPase A chain family. In terms of assembly, F-type ATPases have 2 components, CF(1) - the catalytic core - and CF(0) - the membrane proton channel. CF(1) has five subunits: alpha(3), beta(3), gamma(1), delta(1), epsilon(1). CF(0) has three main subunits: a(1), b(2) and c(9-12). The alpha and beta chains form an alternating ring which encloses part of the gamma chain. CF(1) is attached to CF(0) by a central stalk formed by the gamma and epsilon chains, while a peripheral stalk is formed by the delta and b chains.

The protein localises to the cell inner membrane. In terms of biological role, key component of the proton channel; it plays a direct role in the translocation of protons across the membrane. The protein is ATP synthase subunit a of Granulibacter bethesdensis (strain ATCC BAA-1260 / CGDNIH1).